The sequence spans 183 residues: Adenine phosphoribosyltransferase (183 aa).

The protein belongs to the purine/pyrimidine phosphoribosyltransferase family. Homodimer.

It is found in the cytoplasm. It carries out the reaction AMP + diphosphate = 5-phospho-alpha-D-ribose 1-diphosphate + adenine. It functions in the pathway purine metabolism; AMP biosynthesis via salvage pathway; AMP from adenine: step 1/1. Functionally, catalyzes a salvage reaction resulting in the formation of AMP, that is energically less costly than de novo synthesis. The protein is Adenine phosphoribosyltransferase of Shigella flexneri serotype 5b (strain 8401).